Reading from the N-terminus, the 442-residue chain is tRNA modification GTPase MnmE (442 aa).

(6S)-5-formyl-5,6,7,8-tetrahydrofolate-binding residues include Arg-23, Glu-82, and Lys-121. Residues 217-363 (PFKIAIIGET…LVDLLTKYIN (147 aa)) form the TrmE-type G domain. Position 227 (Asn-227) interacts with K(+). Residues 227–232 (NVGKSS), 246–252 (SNIKGST), and 271–274 (DTAG) each bind GTP. Residue Ser-231 coordinates Mg(2+). The K(+) site is built by Ser-246, Ile-248, and Ser-251. Residue Thr-252 participates in Mg(2+) binding. Position 442 (Lys-442) interacts with (6S)-5-formyl-5,6,7,8-tetrahydrofolate.

It belongs to the TRAFAC class TrmE-Era-EngA-EngB-Septin-like GTPase superfamily. TrmE GTPase family. Homodimer. Heterotetramer of two MnmE and two MnmG subunits. K(+) serves as cofactor.

It localises to the cytoplasm. Exhibits a very high intrinsic GTPase hydrolysis rate. Involved in the addition of a carboxymethylaminomethyl (cmnm) group at the wobble position (U34) of certain tRNAs, forming tRNA-cmnm(5)s(2)U34. The protein is tRNA modification GTPase MnmE of Mycoplasma genitalium (strain ATCC 33530 / DSM 19775 / NCTC 10195 / G37) (Mycoplasmoides genitalium).